The following is a 303-amino-acid chain: Protease HtpX homolog (303 aa).

Transmembrane regions (helical) follow at residues 19 to 39 (IIIF…VSYF) and 41 to 61 (LGEF…YYAY). His146 serves as a coordination point for Zn(2+). Residue Glu147 is part of the active site. Position 150 (His150) interacts with Zn(2+). The next 2 helical transmembrane spans lie at 156-176 (VRLQ…GDSL) and 192-212 (NILG…ATLL). Position 221 (Glu221) interacts with Zn(2+).

Belongs to the peptidase M48B family. Zn(2+) is required as a cofactor.

The protein resides in the cell inner membrane. This is Protease HtpX homolog from Dictyoglomus thermophilum (strain ATCC 35947 / DSM 3960 / H-6-12).